Reading from the N-terminus, the 599-residue chain is Elongation factor 4 (599 aa).

A tr-type G domain is found at 2–184 (KHIRNFSIIA…RLVRDIPPPQ (183 aa)). GTP contacts are provided by residues 14–19 (DHGKST) and 131–134 (NKID).

The protein belongs to the TRAFAC class translation factor GTPase superfamily. Classic translation factor GTPase family. LepA subfamily.

It is found in the cell inner membrane. It catalyses the reaction GTP + H2O = GDP + phosphate + H(+). In terms of biological role, required for accurate and efficient protein synthesis under certain stress conditions. May act as a fidelity factor of the translation reaction, by catalyzing a one-codon backward translocation of tRNAs on improperly translocated ribosomes. Back-translocation proceeds from a post-translocation (POST) complex to a pre-translocation (PRE) complex, thus giving elongation factor G a second chance to translocate the tRNAs correctly. Binds to ribosomes in a GTP-dependent manner. The protein is Elongation factor 4 of Yersinia enterocolitica serotype O:8 / biotype 1B (strain NCTC 13174 / 8081).